The following is a 144-amino-acid chain: Peptide methionine sulfoxide reductase MsrB (144 aa).

The MsrB domain occupies 5–127 (KEEKIKSLNR…NSAALRFIPK (123 aa)). The Nucleophile role is filled by Cys116.

The protein belongs to the MsrB Met sulfoxide reductase family.

It catalyses the reaction L-methionyl-[protein] + [thioredoxin]-disulfide + H2O = L-methionyl-(R)-S-oxide-[protein] + [thioredoxin]-dithiol. In Bacillus velezensis (strain DSM 23117 / BGSC 10A6 / LMG 26770 / FZB42) (Bacillus amyloliquefaciens subsp. plantarum), this protein is Peptide methionine sulfoxide reductase MsrB.